A 662-amino-acid chain; its full sequence is 72 kDa type IV collagenase (662 aa).

Residues 1–29 (MEARLVWGVLVGPLRVLCVLCCLLGHAIA) form the signal peptide. Positions 30–109 (APSPIIKFPG…PRCGNPDVAN (80 aa)) are cleaved as a propeptide — activation peptide. A Cysteine switch motif is present at residues 100 to 107 (PRCGNPDV). Cys102 is a binding site for Zn(2+). The collagenase-like 1 stretch occupies residues 110–221 (YNFFPRKPKW…LWTLGEGQVV (112 aa)). Ca(2+) is bound by residues Asp134 and Asp168. Positions 178 and 180 each coordinate Zn(2+). Residues Asp185 and Gly186 each contribute to the Ca(2+) site. Residue His193 coordinates Zn(2+). Residues Gly200, Gly202, and Asp204 each contribute to the Ca(2+) site. His206 contributes to the Zn(2+) binding site. Positions 208, 209, and 211 each coordinate Ca(2+). The interval 222–396 (RVKYGNADGE…WGFCPDQGYS (175 aa)) is collagen-binding. Fibronectin type-II domains are found at residues 228-276 (ADGE…FCPH), 286-334 (GDGQ…FCPE), and 344-392 (SEGA…FCPD). 6 disulfide bridges follow: Cys233–Cys259, Cys247–Cys274, Cys291–Cys317, Cys305–Cys332, Cys349–Cys375, and Cys363–Cys390. Residues 397–467 (LFLVAAHEFG…GPTPTLGPVT (71 aa)) form a collagenase-like 2 region. Position 403 (His403) interacts with Zn(2+). The active site involves Glu404. His407 and His413 together coordinate Zn(2+). Positions 414–662 (SQDPGALMAP…GSIKSDWLGC (249 aa)) are required for inhibitor TIMP2 binding. The cysteines at positions 471 and 662 are disulfide-linked. Hemopexin repeat units follow at residues 474 to 518 (DIVF…WPEL), 519 to 565 (PEKI…GLPP), 567 to 615 (VQQV…WNAI), and 616 to 662 (PDNL…WLGC). 3 residues coordinate Ca(2+): Asp478, Asp523, and Asp571. Asn575 carries N-linked (GlcNAc...) asparagine glycosylation. Asp620 contributes to the Ca(2+) binding site. N-linked (GlcNAc...) asparagine glycosylation occurs at Asn644.

Belongs to the peptidase M10A family. Interacts (via the C-terminal hemopexin-like domains-containing region) with the integrin alpha-V/beta-3; the interaction promotes vascular invasion in angiogenic vessels and melamoma cells. Interacts (via the C-terminal PEX domain) with TIMP2 (via the C-terminal); the interaction inhibits the degradation activity. Interacts with GSK3B. Ca(2+) serves as cofactor. It depends on Zn(2+) as a cofactor. In terms of processing, phosphorylation on multiple sites modulates enzymatic activity. Phosphorylated by PKC in vitro. The propeptide is processed by MMP14 (MT-MMP1) and MMP16 (MT-MMP3). Autocatalytic cleavage in the C-terminal produces the anti-angiogenic peptide, PEX. This processing appears to be facilitated by binding integrin integrinv/beta3.

The protein localises to the secreted. It is found in the extracellular space. The protein resides in the extracellular matrix. It localises to the membrane. Its subcellular location is the nucleus. It catalyses the reaction Cleavage of gelatin type I and collagen types IV, V, VII, X. Cleaves the collagen-like sequence Pro-Gln-Gly-|-Ile-Ala-Gly-Gln.. In terms of biological role, ubiquitinous metalloproteinase that is involved in diverse functions such as remodeling of the vasculature, angiogenesis, tissue repair, tumor invasion, inflammation, and atherosclerotic plaque rupture. As well as degrading extracellular matrix proteins, can also act on several nonmatrix proteins such as big endothelial 1 and beta-type CGRP promoting vasoconstriction. Also cleaves KISS at a Gly-|-Leu bond. Appears to have a role in myocardial cell death pathways. Contributes to myocardial oxidative stress by regulating the activity of GSK3beta. Cleaves GSK3beta in vitro. Involved in the formation of the fibrovascular tissues. Functionally, PEX, the C-terminal non-catalytic fragment of MMP2, possesses anti-angiogenic and anti-tumor properties and inhibits cell migration and cell adhesion to FGF2 and vitronectin. Ligand for integrin alpha-v/beta3 on the surface of blood vessels. This Rattus norvegicus (Rat) protein is 72 kDa type IV collagenase (Mmp2).